The sequence spans 205 residues: Lipoprotein MlpB (205 aa).

An N-terminal signal peptide occupies residues 1 to 17; sequence MKIINILFCLLLIVLNS. Residue Cys-18 is the site of N-palmitoyl cysteine attachment. Cys-18 carries the S-diacylglycerol cysteine lipid modification.

Belongs to the Multicopy lipoprotein (Mlp) family.

It is found in the cell outer membrane. In terms of biological role, an outer membrane protein that may participate in pathogenesis. Some human Lyme disease patients have antibodies against this protein. The Mlp proteins probably undergo intragenic recombination, generating new alleles. This chain is Lipoprotein MlpB, found in Borreliella burgdorferi (strain ATCC 35210 / DSM 4680 / CIP 102532 / B31) (Borrelia burgdorferi).